Reading from the N-terminus, the 322-residue chain is MKTEQLQTEQKRIHFDGVMQKLGPFLGLFILVIIVSILNPSFLEPLNILNLLRQVAINGLIAFGMTFVILTGGIDLSVGAILALSSALVAGMIVSGVDPVLAIILGCIIGAVLGMINGLLITKGKMAPFIATLATMTVFRGLTLVYTDGNPITGLGTNYGFQMFGRGYFLGIPVPAITMVLAFVILWVLLHKTPFGRRTYAIGGNEKAALISGIKVTRVKVMIYSLAGLLSALAGAILTSRLHSAQPTAGESYELDAIAAVVLGGTSLSGGRGRIVGTLIGVLIIGTLNNGLNLLGVSSFYQLVVKGIVILIAVLLDRKKSA.

8 helical membrane-spanning segments follow: residues 22-42, 48-70, 77-94, 101-121, 126-146, 169-189, 219-239, and 294-314; these read LGPFLGLFILVIIVSILNPSF, ILNLLRQVAINGLIAFGMTFVIL, SVGAILALSSALVAGMIV, LAIILGCIIGAVLGMINGLLI, MAPFIATLATMTVFRGLTLVY, FLGIPVPAITMVLAFVILWVL, VKVMIYSLAGLLSALAGAILT, and LLGVSSFYQLVVKGIVILIAV.

Belongs to the binding-protein-dependent transport system permease family. AraH/RbsC subfamily. In terms of assembly, the complex is composed of an ATP-binding protein (RbsA), two transmembrane proteins (RbsC) and a solute-binding protein (RbsB).

The protein resides in the cell membrane. Part of the ABC transporter complex RbsABC involved in ribose import. Probably responsible for the translocation of the substrate across the membrane. This chain is Ribose import permease protein RbsC (rbsC), found in Bacillus subtilis (strain 168).